The primary structure comprises 99 residues: MTSALTQGLERIPDQLGYLVLSEGAVLASSGDLENDEQAASAISELVSTACGFRLHRGMNVPFKRLSVVFGEHTLLVTVSGQRVFVVKRQNRGREPIDV.

Methionine 1 is subject to N-acetylmethionine. An N-acetylthreonine; in Ragulator complex protein LAMTOR4, N-terminally processed modification is found at threonine 2. Position 67 is a phosphoserine; by PKA (serine 67).

The protein belongs to the LAMTOR4 family. Part of the Ragulator complex composed of LAMTOR1, LAMTOR2, LAMTOR3, LAMTOR4 and LAMTOR5. LAMTOR4 and LAMTOR5 form a heterodimer that interacts, through LAMTOR1, with a LAMTOR2, LAMTOR3 heterodimer. The Ragulator complex interacts with both the mTORC1 complex and heterodimers constituted of the Rag GTPases RagA/RRAGA, RagB/RRAGB, RagC/RRAGC and RagD/RRAGD; regulated by amino acid availability. The Ragulator complex interacts with SLC38A9; the probable amino acid sensor. Component of the lysosomal folliculin complex (LFC), composed of FLCN, FNIP1 (or FNIP2), RagA/RRAGA or RagB/RRAGB GDP-bound, RagC/RRAGC or RagD/RRAGD GTP-bound, and Ragulator. In terms of processing, phosphorylation at Ser-67 by PKA inhibits Ragulator complex assembly.

Its subcellular location is the lysosome. Functionally, as part of the Ragulator complex it is involved in amino acid sensing and activation of mTORC1, a signaling complex promoting cell growth in response to growth factors, energy levels, and amino acids. Activated by amino acids through a mechanism involving the lysosomal V-ATPase, the Ragulator plays a dual role for the small GTPases Rag (RagA/RRAGA, RagB/RRAGB, RagC/RRAGC and/or RagD/RRAGD): it (1) acts as a guanine nucleotide exchange factor (GEF), activating the small GTPases Rag and (2) mediates recruitment of Rag GTPases to the lysosome membrane. Activated Ragulator and Rag GTPases function as a scaffold recruiting mTORC1 to lysosomes where it is in turn activated. The polypeptide is Ragulator complex protein LAMTOR4 (Homo sapiens (Human)).